The following is a 337-amino-acid chain: Adenosine deaminase-like protein (337 aa).

Zn(2+) is bound by residues His-14 and His-16. Residues His-16, Asn-18, His-66, 98 to 101 (TTPK), and Gly-171 each bind N(6)-methyl-AMP. His-198 serves as a coordination point for Zn(2+). N(6)-methyl-AMP is bound by residues Glu-201, Asp-276, and Asp-277. Glu-201 functions as the Proton donor in the catalytic mechanism. Asp-276 is a Zn(2+) binding site.

This sequence belongs to the metallo-dependent hydrolases superfamily. Adenosine and AMP deaminases family. In terms of assembly, monomer. Zn(2+) serves as cofactor.

The enzyme catalyses N(6)-methyl-AMP + H2O + H(+) = IMP + methylamine. Catalyzes the hydrolysis of the free cytosolic methylated adenosine nucleotide N(6)-methyl-AMP (N6-mAMP) to produce inositol monophosphate (IMP) and methylamine. Is required for the catabolism of cytosolic N6-mAMP, which is derived from the degradation of mRNA containing N6-methylated adenine (m6A). The sequence is that of Adenosine deaminase-like protein (Ada) from Drosophila melanogaster (Fruit fly).